Reading from the N-terminus, the 334-residue chain is Beta-ketoacyl-[acyl-carrier-protein] synthase III (334 aa).

Catalysis depends on residues Cys-114 and His-253. An ACP-binding region spans residues 254–258 (QANIR). Asn-283 is an active-site residue.

It belongs to the thiolase-like superfamily. FabH family. In terms of assembly, homodimer.

It is found in the cytoplasm. It carries out the reaction malonyl-[ACP] + acetyl-CoA + H(+) = 3-oxobutanoyl-[ACP] + CO2 + CoA. Its pathway is lipid metabolism; fatty acid biosynthesis. In terms of biological role, catalyzes the condensation reaction of fatty acid synthesis by the addition to an acyl acceptor of two carbons from malonyl-ACP. Catalyzes the first condensation reaction which initiates fatty acid synthesis and may therefore play a role in governing the total rate of fatty acid production. Possesses both acetoacetyl-ACP synthase and acetyl transacylase activities. Its substrate specificity determines the biosynthesis of branched-chain and/or straight-chain of fatty acids. This Campylobacter concisus (strain 13826) protein is Beta-ketoacyl-[acyl-carrier-protein] synthase III.